A 460-amino-acid polypeptide reads, in one-letter code: Serine protease HTRA1 (460 aa).

An N-terminal signal peptide occupies residues 1 to 18; it reads MAMLWLAVLLTCGAPAAL. The region spanning 22-92 is the IGFBP N-terminal domain; it reads SGVGCPSRCD…NGGVARCQCP (71 aa). Cystine bridges form between Cys26–Cys51, Cys30–Cys53, Cys35–Cys54, Cys42–Cys57, Cys65–Cys80, Cys74–Cys89, Cys91–Cys109, and Cys98–Cys134. A Kazal-like domain is found at 74-136; it reads CASGLRCVKN…IPIQRGDCQQ (63 aa). Residues 183–343 are serine protease; it reads GSGFIVSEDG…IPSDKIRKFL (161 aa). Active-site charge relay system residues include His199, Asp229, and Ser307. The PDZ domain maps to 344–447; the sequence is AESHNRQSTG…LHLVIRRGNE (104 aa).

The protein belongs to the peptidase S1C family. In terms of assembly, forms homotrimers. In the presence of substrate, may form higher-order multimers in a PDZ-independent manner.

It is found in the cell membrane. Its subcellular location is the secreted. The protein resides in the cytoplasm. It localises to the cytosol. Serine protease with a variety of targets, including extracellular matrix proteins and proteoglycans such as biglycan, syndecan-4 and glypican-4. Through cleavage of proteoglycans, may release soluble FGF-glycosaminoglycan complexes that promote the range and intensity of FGF signals in the extracellular space. Consequently, facilitates inductive processes in the developing embryo, such as posteriorization, mesoderm induction and neuronal differentiation. Regulates the availability of insulin-like growth factors (IGFs) by cleaving IGF-binding proteins. Inhibits signaling mediated by TGF-beta family members. Consequently, may regulate many physiological processes. Intracellularly, degrades TSC2, leading to the activation of TSC2 downstream targets. This chain is Serine protease HTRA1 (htra1), found in Xenopus tropicalis (Western clawed frog).